The following is a 138-amino-acid chain: Outer membrane protein assembly factor BamE (138 aa).

The N-terminal stretch at 1 to 42 is a signal peptide; the sequence is MSHLTMIKTLNLRPFHSASALRKIVITSILGVAVTMSGCSLL.

The protein belongs to the BamE family. As to quaternary structure, part of the Bam complex.

It localises to the cell outer membrane. In terms of biological role, part of the outer membrane protein assembly complex, which is involved in assembly and insertion of beta-barrel proteins into the outer membrane. The polypeptide is Outer membrane protein assembly factor BamE (Psychrobacter arcticus (strain DSM 17307 / VKM B-2377 / 273-4)).